The sequence spans 356 residues: MSLQRFISEAISPWMKKDGPDSDIVLSSRIRLARNLQSFRFPLLATIEESKQLVEHVKHHLAESSYHTNRFELLCMDDMKPNVKRVLVEKHLISPHLAEESKHGAVMLSEDESISIMINEEDHLRIQCLFPGFQLSEALVLASGIDDWIEGKVDYAFDEKRGYLTSCPTNVGTGLRASVMMHLPALVMTQQINRILPAINQLGLVVRGIYGEGSEALGNLFQISNQMTLGKSEEDIVEDLRGVVMQLIQQERAARKRLLESSRLQLEDRVYRSYGILAHSRIIESKEATQKLSDVRLGIDLGLLKGVSGNILNELMILTQPGFLQQYAGTVLTADQRDERRAALIRARLKLEDESN.

The Phosphagen kinase C-terminal domain occupies 24–254 (IVLSSRIRLA…MQLIQQERAA (231 aa)). Residues 27–31 (SSRIR), H91, R125, 176–180 (RASVM), and 207–212 (RGIYGE) contribute to the ATP site. Residues 337–342 (RDERRA) carry the RDXXRA motif of the pArg binding pocket involved in allosteric regulation motif.

It belongs to the ATP:guanido phosphotransferase family.

The catalysed reaction is L-arginyl-[protein] + ATP = N(omega)-phospho-L-arginyl-[protein] + ADP + H(+). Its activity is regulated as follows. Appears to be allosterically activated by the binding of pArg-containing polypeptides to the pArg-binding pocket localized in the C-terminal domain of McsB. Its function is as follows. Catalyzes the specific phosphorylation of arginine residues in a large number of proteins. Is part of the bacterial stress response system. Protein arginine phosphorylation has a physiologically important role and is involved in the regulation of many critical cellular processes, such as protein homeostasis, motility, competence, and stringent and stress responses, by regulating gene expression and protein activity. The sequence is that of Protein-arginine kinase from Halalkalibacterium halodurans (strain ATCC BAA-125 / DSM 18197 / FERM 7344 / JCM 9153 / C-125) (Bacillus halodurans).